The following is a 299-amino-acid chain: MHLKIDPEVRRALQGKRPVVALESTIITHGMPYPENLATARSLESQVRAGGAVPATIAVIGGVICVGLSDKELEWLAGAKNVLKLSRNDLPYAIATQKIGATTVAATMIAANLAGIRIFATGGIGGVHRGAETTFDISADLEEFARTSVAVVCAGAKAILDLPKTLEYLETRGVPVIAYGTDEFPAFWSRQSGLKAPLRLDTPAEIARFLEVKWSLNLTGGAVICNPVPAEDEIPFHEMRTFIDSAVDEAERYGIKGKAVTPYILARIVELTGGRSLRTNMALAQNNARLAAELATHLQ.

The active-site Proton donor is the glutamate 23. Substrate contacts are provided by lysine 84 and valine 104. Residue aspartate 136 participates in Mn(2+) binding. 138–140 (SAD) is a binding site for substrate. Residue lysine 157 is the Nucleophile of the active site.

The protein belongs to the pseudouridine-5'-phosphate glycosidase family. Homotrimer. Mn(2+) is required as a cofactor.

The enzyme catalyses D-ribose 5-phosphate + uracil = psi-UMP + H2O. In terms of biological role, catalyzes the reversible cleavage of pseudouridine 5'-phosphate (PsiMP) to ribose 5-phosphate and uracil. Functions biologically in the cleavage direction, as part of a pseudouridine degradation pathway. This is Pseudouridine-5'-phosphate glycosidase from Solibacter usitatus (strain Ellin6076).